The following is a 285-amino-acid chain: Cell division protein ZipA (285 aa).

Residue methionine 1 is a topological domain, periplasmic. The chain crosses the membrane as a helical span at residues glutamate 2–phenylalanine 22. At aspartate 23 to arginine 285 the chain is on the cytoplasmic side. The disordered stretch occupies residues alanine 49–arginine 88.

This sequence belongs to the ZipA family. As to quaternary structure, interacts with FtsZ via their C-terminal domains.

The protein localises to the cell inner membrane. In terms of biological role, essential cell division protein that stabilizes the FtsZ protofilaments by cross-linking them and that serves as a cytoplasmic membrane anchor for the Z ring. Also required for the recruitment to the septal ring of downstream cell division proteins. The sequence is that of Cell division protein ZipA from Azotobacter vinelandii (strain DJ / ATCC BAA-1303).